The sequence spans 66 residues: Large ribosomal subunit protein bL35 (66 aa).

The span at 1 to 14 (MPKMKTKSAAKKRF) shows a compositional bias: basic residues. The disordered stretch occupies residues 1–34 (MPKMKTKSAAKKRFSMTATGKVKAGPAGKRHGMI).

This sequence belongs to the bacterial ribosomal protein bL35 family.

The chain is Large ribosomal subunit protein bL35 from Paracoccus denitrificans (strain Pd 1222).